The following is a 309-amino-acid chain: MVMVRDNQFLNLKLSPIQAPTTIPPCRFPIIPATKVSATVSSCASNTFSVANLDRISVLGSGNGGTVFKVKDKTTSEIYALKKVKENWDSTSLREIEILRMVNSPYVAKCHDIFQNPSGEVSILMDYMDLGSLESLRGVTEKQLALMSRQVLEGKNYLHEHKIVHRDIKPANLLRSSKEEVKIADFGVSKIVVRSLNKCNSFVGTFAYMSPERLDSEADGVTEEDKSNVYAGDIWSFGLTMLEILVGYYPMLPDQAAIVCAVCFGEPPKAPEECSDDLKSFMDCCLRKKASERWTASQLLNHPFLLHQD.

The region spanning 53 to 305 is the Protein kinase domain; it reads LDRISVLGSG…ASQLLNHPFL (253 aa). ATP is bound by residues 59–67 and Lys-82; that span reads LGSGNGGTV. The active-site Proton acceptor is Asp-167. 2 positions are modified to phosphoserine: Ser-195 and Ser-201. Position 205 is a phosphothreonine (Thr-205).

This sequence belongs to the protein kinase superfamily. STE Ser/Thr protein kinase family. MAP kinase kinase subfamily. Phosphorylation at Ser-195 and Ser-201 by MAP kinase kinase kinases positively regulates kinase activity.

It carries out the reaction L-seryl-[protein] + ATP = O-phospho-L-seryl-[protein] + ADP + H(+). The catalysed reaction is L-threonyl-[protein] + ATP = O-phospho-L-threonyl-[protein] + ADP + H(+). It catalyses the reaction L-tyrosyl-[protein] + ATP = O-phospho-L-tyrosyl-[protein] + ADP + H(+). The chain is Mitogen-activated protein kinase kinase 8 (MKK8) from Arabidopsis thaliana (Mouse-ear cress).